We begin with the raw amino-acid sequence, 256 residues long: Small ribosomal subunit protein eS1B (256 aa).

Ala-2 is subject to N-acetylalanine; partial.

It belongs to the eukaryotic ribosomal protein eS1 family. As to quaternary structure, component of the small ribosomal subunit. Mature ribosomes consist of a small (40S) and a large (60S) subunit. The 40S subunit contains about 33 different proteins and 1 molecule of RNA (18S). The 60S subunit contains about 49 different proteins and 3 molecules of RNA (25S, 5.8S and 5S).

Its subcellular location is the cytoplasm. The chain is Small ribosomal subunit protein eS1B from Scheffersomyces stipitis (strain ATCC 58785 / CBS 6054 / NBRC 10063 / NRRL Y-11545) (Yeast).